Reading from the N-terminus, the 128-residue chain is Phosphoribosyl-AMP cyclohydrolase (128 aa).

Residue Asp89 participates in Mg(2+) binding. Residue Cys90 coordinates Zn(2+). Residues Asp91 and Asp93 each coordinate Mg(2+). Residues Cys106 and Cys113 each contribute to the Zn(2+) site.

The protein belongs to the PRA-CH family. As to quaternary structure, homodimer. Mg(2+) is required as a cofactor. It depends on Zn(2+) as a cofactor.

It is found in the cytoplasm. The enzyme catalyses 1-(5-phospho-beta-D-ribosyl)-5'-AMP + H2O = 1-(5-phospho-beta-D-ribosyl)-5-[(5-phospho-beta-D-ribosylamino)methylideneamino]imidazole-4-carboxamide. It participates in amino-acid biosynthesis; L-histidine biosynthesis; L-histidine from 5-phospho-alpha-D-ribose 1-diphosphate: step 3/9. Catalyzes the hydrolysis of the adenine ring of phosphoribosyl-AMP. This chain is Phosphoribosyl-AMP cyclohydrolase, found in Pyrobaculum calidifontis (strain DSM 21063 / JCM 11548 / VA1).